Consider the following 1165-residue polypeptide: Disease resistance protein RPS4B (1165 aa).

Residues 12–174 form the TIR domain; sequence PQHQVFINFR…EIVKEVKKVL (163 aa). E86 is an active-site residue. Positions 211–474 constitute an NB-ARC domain; the sequence is KQRLKELEEK…FLDIACFRSQ (264 aa). The stretch at 592 to 613 is one LRR 1 repeat; sequence SHCPHECLTNNKINMPDGLELP. An LRR 2; degenerate repeat occupies 614-635; that stretch reads LKEVRCLHWLKFPLEELPNDFD. LRR repeat units lie at residues 636-659, 684-703, 704-725, 726-748, 772-794, and 795-818; these read PINL…VKDT, NLQR…RDVN, LTSL…PLIP, ENLK…VGNL, LKTL…EINK, and SSLK…SVQY. The LRR 9; degenerate repeat unit spans residues 819–836; the sequence is LCLSRNDHLIYLPAGINQ. An LRR 10 repeat occupies 837–863; the sequence is VSQLTRLDLKYCTKLTYVPELPPTLQY.

It belongs to the disease resistance TIR-NB-LRR family. As to quaternary structure, interacts with RRS1B. RPS4B-RRS1B heterodimer interacts with the bacterial effectors AvrRps4 and PopP2.

The protein localises to the nucleus. The enzyme catalyses NAD(+) + H2O = ADP-D-ribose + nicotinamide + H(+). Functionally, disease resistance (R) protein that specifically recognizes the AvrRps4 type III effector avirulence protein from P.syringae. Heterodimerization with RRS1B is required to form a functional complex to recognize AvrRps4 and to mediate the hypersensitive response. This is Disease resistance protein RPS4B from Arabidopsis thaliana (Mouse-ear cress).